The sequence spans 170 residues: Peroxidase 2 (170 aa).

Residue Asn-9 is glycosylated (N-linked (GlcNAc...) asparagine). His-24 is a heme b binding site. Thr-25 is a binding site for Ca(2+). Cysteines 31 and 59 form a disulfide. Ca(2+) contacts are provided by Asp-73, Thr-76, and Asp-81.

The protein belongs to the peroxidase family. Classical plant (class III) peroxidase subfamily. Ca(2+) is required as a cofactor. Requires heme b as cofactor.

It carries out the reaction 2 a phenolic donor + H2O2 = 2 a phenolic radical donor + 2 H2O. In terms of biological role, removal of H(2)O(2), oxidation of toxic reductants, biosynthesis and degradation of lignin, suberization, auxin catabolism, response to environmental stresses such as wounding, pathogen attack and oxidative stress. These functions might be dependent on each isozyme/isoform in each plant tissue. Its function is as follows. Involved in defense response to powdery meldew fungus. The protein is Peroxidase 2 of Hordeum vulgare (Barley).